Consider the following 221-residue polypeptide: U1 small nuclear ribonucleoprotein C (221 aa).

The segment at 4–36 (YFCDYCDTYLTHDSPSVRKTHCNGRKHKENVRV) adopts a Matrin-type zinc-finger fold. The segment at 100–168 (SNPFPTSQAG…PPGAPTLPQP (69 aa)) is disordered. A compositionally biased stretch (pro residues) spans 134–166 (APAPPRMPGPLLMTPPPGAAAPGMAPPGAPTLP).

The protein belongs to the U1 small nuclear ribonucleoprotein C family. As to quaternary structure, U1 snRNP is composed of the 7 core Sm proteins B/B', D1, D2, D3, E, F and G that assemble in a heptameric protein ring on the Sm site of the small nuclear RNA to form the core snRNP, and at least 3 U1 snRNP-specific proteins U1-70K, U1-A and U1-C. U1-C interacts with U1 snRNA and the 5' splice-site region of the pre-mRNA.

The protein resides in the nucleus. In terms of biological role, component of the spliceosomal U1 snRNP, which is essential for recognition of the pre-mRNA 5' splice-site and the subsequent assembly of the spliceosome. U1-C is directly involved in initial 5' splice-site recognition for both constitutive and regulated alternative splicing. The interaction with the 5' splice-site seems to precede base-pairing between the pre-mRNA and the U1 snRNA. Stimulates commitment or early (E) complex formation by stabilizing the base pairing of the 5' end of the U1 snRNA and the 5' splice-site region. This Branchiostoma floridae (Florida lancelet) protein is U1 small nuclear ribonucleoprotein C.